The sequence spans 499 residues: L-arabinose isomerase (499 aa).

Mn(2+) is bound by residues Glu-306, Glu-333, His-350, and His-449.

Belongs to the arabinose isomerase family. Requires Mn(2+) as cofactor.

The enzyme catalyses beta-L-arabinopyranose = L-ribulose. Its pathway is carbohydrate degradation; L-arabinose degradation via L-ribulose; D-xylulose 5-phosphate from L-arabinose (bacterial route): step 1/3. Its function is as follows. Catalyzes the conversion of L-arabinose to L-ribulose. This chain is L-arabinose isomerase, found in Aeromonas hydrophila subsp. hydrophila (strain ATCC 7966 / DSM 30187 / BCRC 13018 / CCUG 14551 / JCM 1027 / KCTC 2358 / NCIMB 9240 / NCTC 8049).